The sequence spans 181 residues: Protein GrpE (181 aa).

Positions 1 to 12 are enriched in polar residues; sequence MENTQENPTTPS. Residues 1 to 33 are disordered; it reads MENTQENPTTPSAEDIGSEKQAAQGAAPAAEAA. Over residues 21–33 the composition is skewed to low complexity; the sequence is QAAQGAAPAAEAA.

This sequence belongs to the GrpE family. In terms of assembly, homodimer.

It is found in the cytoplasm. Participates actively in the response to hyperosmotic and heat shock by preventing the aggregation of stress-denatured proteins, in association with DnaK and GrpE. It is the nucleotide exchange factor for DnaK and may function as a thermosensor. Unfolded proteins bind initially to DnaJ; upon interaction with the DnaJ-bound protein, DnaK hydrolyzes its bound ATP, resulting in the formation of a stable complex. GrpE releases ADP from DnaK; ATP binding to DnaK triggers the release of the substrate protein, thus completing the reaction cycle. Several rounds of ATP-dependent interactions between DnaJ, DnaK and GrpE are required for fully efficient folding. The chain is Protein GrpE from Burkholderia cenocepacia (strain HI2424).